The following is a 429-amino-acid chain: tRNA threonylcarbamoyladenosine dehydratase 1 (429 aa).

2 consecutive transmembrane segments (helical) span residues 3 to 23 and 74 to 94; these read NNTWKLIATTALISVFSTQLA and EQYIVIVGAGEVGSWVCTMLI. Ser259 carries the post-translational modification Phosphoserine. A helical membrane pass occupies residues 279-299; that stretch reads LPELGTMPGIFGLSIATWILT.

It belongs to the HesA/MoeB/ThiF family.

Its subcellular location is the mitochondrion outer membrane. Catalyzes the ATP-dependent dehydration of threonylcarbamoyladenosine at position 37 (t(6)A37) to form cyclic t(6)A37 (ct(6)A37) in tRNAs that read codons beginning with adenine. In Saccharomyces cerevisiae (strain ATCC 204508 / S288c) (Baker's yeast), this protein is tRNA threonylcarbamoyladenosine dehydratase 1 (TCD1).